The chain runs to 255 residues: Small ribosomal subunit protein eS1 (255 aa).

Ala2 carries the post-translational modification N-acetylalanine; partial.

It belongs to the eukaryotic ribosomal protein eS1 family. In terms of assembly, component of the small ribosomal subunit. Mature ribosomes consist of a small (40S) and a large (60S) subunit. The 40S subunit contains about 33 different proteins and 1 molecule of RNA (18S). The 60S subunit contains about 49 different proteins and 3 molecules of RNA (25S, 5.8S and 5S).

The protein localises to the cytoplasm. The sequence is that of Small ribosomal subunit protein eS1 from Kluyveromyces lactis (strain ATCC 8585 / CBS 2359 / DSM 70799 / NBRC 1267 / NRRL Y-1140 / WM37) (Yeast).